The sequence spans 2276 residues: MAQKLRFYLFGDQTYDYDEQLRALLTSHDPVVRSFLERAYYTLRAEVARIPNGYQARISRFSSIAELLSQRREHGVDASLEQALTVVYQLASFMRLHSERSLSYPSADDAHCLGLCTGALSAAAVSSSRSLSELLPAAIETVILAFRTGLHASDSGRRIEESSAAAKCWSISLQGLEGHVARKLLEEWSNKKRLPPMSRPYISAYASGGVTISGPPSVLAELRNTPGLSKLRAKDIPIHAPYHSSAIFNQCDVETILSSALIDLASRATHVPILSTGTGRLVWAGTLPAAIQSALQDVLLRPISWENMSCGISTCLQSIDPSEVEVIPIATLAGPLLCRSVQVAKSQIPATIDPKNDVMNEAQSQIAEAMDRAKIAIVGMSGRFPGAENVDSLWELLMAGRDMCKEVPPTRWNVDTHVDPTGKRKNTSKIRWGCWLDNPDMFDARFFNMSPREAPQVDPAQRIALITAYEAIEQAGIVPGRTPSTQEDRVGVFFGTTSNDWCESNSGQDIDTYYIPGANRAFIPGRINYVFKFSGPSYSIDTACSSSLSALHVACNALWHGDIDTAIAGGTNVLTNPDMTAGLDRGHFLSATGNCKTFDDTADGYCRGEGVATVVLKRMDDAIADKDPILGVIRGVYTNHSAEAESITRPHVGAQKAIFQHVLNHSGIRPQDISYIEMHGTGTQAGDMREMTSVLDTFSPQYPGAIQREKPLYLGAVKSNIGHGESVSGVTALVKVIMMMQNNTIPPHRGVHTRLNRRFPSNLDERNVHIAFQATEWPRGQTPRRAFINNFSAAGGNSSVLVEDPPLILKEEGADPRSSHVIAVSAKSPSALRKNLESMRRYAMSEHTEKSLCELSYTTTARRIHHSHRLMFAGSSLEDILREMESKLAIKEPFSPCAPLQSVIFTFTGQGAQYPGMGQVFFNNFSVFRSDLCRLDDLAQKLGFPTFLPIFSASTHARLEGFTPTVVQLANTCMQLALTRLWVSWGIRPSAVVGHSIGEYAALNTAGVLSDADTVYLVGKRAQLLEEKCNRGSHTMLAALASFEKVSRLLDSAPCEVACINGPEEIVLAGPRSHMTDIQKILVAHSIRCTMLQVPFAFHSSQVDPILQDFQSAIEGVTFHKPTIPVISPLLGDFVTETGTFNPNYLARHCREPVNILQALRQASTMNLVHDSSVVMEFGPHPVVSGMVKSTLGNSIKALPTLQRNRNTWEVLTESVSTLYCMGFDINWTEYHRDFPSSQRVLRLPSYSWDLKSYWIPYRNDWTLYKGDIVPESSIALPTHQNKPHSTSPKQQAPTPILETTTLHRIVDEKSTEGTFSITCESDVSRPDLSPLVQGHKVEGIGLCTPSVYADIGFTLGNYLLDRFPTRFGPDTKVVDVTDMVIEKALMPLNAGPQLLRVTASLIWSEKEASVRFYSVDENHTETVQHSHCRIKFSDRSTYQAYQEQISAVKARMFEMKTNSSSGRTYRFNGPMAYNMVQALAEFHPDYRCIDETILDNETLEAACTVSFGNVKKEGVFHTHPGYIDGLTQSGGFVMNANDKTNLGVEVFVNHGWDSFQLYEPVTDDRSYQTHVRMRPAESNQWKGDVVVLSGENLVACVRGLTIQGVPRRVLRYILQSSAKTTQTATSSVPAPSQAPVMVPQIVQVPKAKPISQISGTLTEALRIICEQSGVPLAELTDDATFANIGVDSLLALTITSAFVEELDLDVDSSLFMDYPTVADLKRFFDKINTQHAPAPAPVSDAPKQLQPSSSPVASATPSAPIHGRSKFESVLNILTEESGVEMAGLPDSTALADIGIDSLLSLVVTSRLNDELELDVSSEDFNDCLTIRDLKAHFMSKNSDNGSSAVLTPQPSRDSALPERTRPRVADTSDEEDAPVSANEFTTSARSTSKYMAVLNIISEESGMAIEDFTDNVMFADIGIDSLLSLVIGGRIREELSFDLEVDSLFVDYPDVKGLRSFFGFESNKTATNPTASQSSSSISSGTSVFDTSPSPTDLDILTPESSLSQEEFEQPLTIATKPLPPATSVTLQGLPSKAHKILFLFPDGSGSATSYAKLPRLGADVAIIGLNSPYLMDGANMTCTFDELVTLYLTEIQRRQPAGPYHLGGWSAGGILAYRAAQILQKAAANPQKPVVESLLLLDSPPPTGLGKLPKHFFDYCDQIGIFGQGTAKAPEWLITHFQGTNSVLHEYHATPFSFGTAPRTGIIWASQTVFETRAVAPPPVRPDDTEDMKFLTERRTDFSAGSWGHMFPGTEVLIETAYGADHFSLLVSLLFRD.

The tract at residues 8-243 (YLFGDQTYDY…KDIPIHAPYH (236 aa)) is N-terminal acylcarrier protein transacylase (SAT) domain. Residues 372 to 804 (RAKIAIVGMS…GGNSSVLVED (433 aa)) enclose the Ketosynthase family 3 (KS3) domain. Residues Cys-544, His-679, and His-723 each act as for beta-ketoacyl synthase activity in the active site. The segment at 905 to 1206 (FTFTGQGAQY…KALPTLQRNR (302 aa)) is malonyl-CoA:ACP transacylase (MAT) domain. Catalysis depends on Ser-996, which acts as the For acyl/malonyl transferase activity. The segment at 1300-1616 (TTTLHRIVDE…PRRVLRYILQ (317 aa)) is product template (PT) domain. Residues 1304–1438 (HRIVDEKSTE…CRIKFSDRST (135 aa)) are N-terminal hotdog fold. In terms of domain architecture, PKS/mFAS DH spans 1304–1612 (HRIVDEKSTE…IQGVPRRVLR (309 aa)). Catalysis depends on His-1336, which acts as the Proton acceptor; for dehydratase activity. Positions 1465 to 1612 (TYRFNGPMAY…IQGVPRRVLR (148 aa)) are C-terminal hotdog fold. Catalysis depends on Asp-1525, which acts as the Proton donor; for dehydratase activity. The 75-residue stretch at 1655-1729 (SGTLTEALRI…DLKRFFDKIN (75 aa)) folds into the Carrier 1 domain. O-(pantetheine 4'-phosphoryl)serine is present on Ser-1689. A disordered region spans residues 1735–1762 (APAPVSDAPKQLQPSSSPVASATPSAPI). Residues 1748-1761 (PSSSPVASATPSAP) show a composition bias toward low complexity. The 75-residue stretch at 1765–1839 (RSKFESVLNI…DLKAHFMSKN (75 aa)) folds into the Carrier 2 domain. At Ser-1799 the chain carries O-(pantetheine 4'-phosphoryl)serine. Residues 1840–1854 (SDNGSSAVLTPQPSR) are compositionally biased toward polar residues. The interval 1840 to 1882 (SDNGSSAVLTPQPSRDSALPERTRPRVADTSDEEDAPVSANEF) is disordered. The segment covering 1857-1868 (ALPERTRPRVAD) has biased composition (basic and acidic residues). One can recognise a Carrier 3 domain in the interval 1886–1964 (ARSTSKYMAV…GLRSFFGFES (79 aa)). O-(pantetheine 4'-phosphoryl)serine is present on Ser-1923. Positions 1967–1993 (TATNPTASQSSSSISSGTSVFDTSPSP) are disordered. Residues 1969–1990 (TNPTASQSSSSISSGTSVFDTS) show a composition bias toward low complexity. The thioesterase (TE) domain stretch occupies residues 2020 to 2271 (PLPPATSVTL…GADHFSLLVS (252 aa)).

The protein resides in the cytoplasmic vesicle. It catalyses the reaction 7 malonyl-CoA + acetyl-CoA + 7 H(+) = 7,9,10-trihydroxy-3-(2-oxopropyl)-1H-benzo[g]isochromen-1-one + 7 CO2 + 8 CoA + 2 H2O. It participates in secondary metabolite biosynthesis. Its function is as follows. Non-reducing polyketide synthase; part of the gene cluster that mediates the biosynthesis of viriditoxin, one of the 'classical' secondary metabolites produced by fungi and that has antibacterial activity. The first step is performed by the polyketide synthase VdtA which condenses one acetyl-CoA and 6 malonyl-CoA units to form the heptaketide monomer backbone of viriditoxin. The product of VdtA is then O-methylated on C7 by the O-methyltransferase VdtC. The O-methyl group is important for the stereoselective coupling of the monomers at the final step of viriditoxin biosynthesis. The short-chain dehydrogenase/reductase VdtF then acts as a stereospecific reductase converting the pyrone to dihydropyrone via the reduction of the C3-C4 double bond. The FAD-binding monooxygenase VdtE then converts the ketone group into a methyl-ester group to yield semi-viriditoxin. Finally, the laccase VdtB is involved in dimerization of 2 semi-viriditoxin molecules to yield the final viriditoxin. VdtB is responsible for the regioselective 6,6'-coupling of semi-viriditoxin, which yields (M)-viriditoxin and (P)-viriditoxin at a ratio of 1:2. The non-catalytic carboxylesterase-like protein VdtD affects the stereochemistical outcome of the coupling. The highly reducing polyketide synthase VdtX is not involved in viriditoxin synthesis, but might possibly play a role in the production of additional metabolites not identified yet. The protein is Non-reducing polyketide synthase VdtA of Byssochlamys spectabilis (Paecilomyces variotii).